The chain runs to 461 residues: tRNA modification GTPase MnmE (461 aa).

(6S)-5-formyl-5,6,7,8-tetrahydrofolate-binding residues include R23, E88, and R127. Residues 223–382 enclose the TrmE-type G domain; it reads GLNTVIVGKP…VEEALVEIVY (160 aa). N233 serves as a coordination point for K(+). GTP contacts are provided by residues 233-238, 252-258, and 277-280; these read NVGKSS, TEVPGTT, and DTAG. S237 contributes to the Mg(2+) binding site. K(+) is bound by residues T252, V254, and T257. T258 serves as a coordination point for Mg(2+). A (6S)-5-formyl-5,6,7,8-tetrahydrofolate-binding site is contributed by K461.

The protein belongs to the TRAFAC class TrmE-Era-EngA-EngB-Septin-like GTPase superfamily. TrmE GTPase family. In terms of assembly, homodimer. Heterotetramer of two MnmE and two MnmG subunits. K(+) is required as a cofactor.

Its subcellular location is the cytoplasm. Its function is as follows. Exhibits a very high intrinsic GTPase hydrolysis rate. Involved in the addition of a carboxymethylaminomethyl (cmnm) group at the wobble position (U34) of certain tRNAs, forming tRNA-cmnm(5)s(2)U34. The polypeptide is tRNA modification GTPase MnmE (Alkaliphilus metalliredigens (strain QYMF)).